The chain runs to 315 residues: tRNA dimethylallyltransferase (315 aa).

13–20 (GPTASGKT) serves as a coordination point for ATP. 15–20 (TASGKT) provides a ligand contact to substrate. Interaction with substrate tRNA stretches follow at residues 38–41 (DSAL), 162–166 (QRLSR), 243–248 (RCVGYR), and 276–283 (KRQITWLR).

The protein belongs to the IPP transferase family. Monomer. Requires Mg(2+) as cofactor.

The catalysed reaction is adenosine(37) in tRNA + dimethylallyl diphosphate = N(6)-dimethylallyladenosine(37) in tRNA + diphosphate. Functionally, catalyzes the transfer of a dimethylallyl group onto the adenine at position 37 in tRNAs that read codons beginning with uridine, leading to the formation of N6-(dimethylallyl)adenosine (i(6)A). The chain is tRNA dimethylallyltransferase from Vibrio vulnificus (strain CMCP6).